The chain runs to 339 residues: DNA repair protein RAD51 homolog 1 (339 aa).

Residues 1 to 23 (MAMQVQFEASTDTSAEEESFGPE) are disordered. Residues 48–77 (TVESVAHAPKKELLNIKGISEAKADKILAE) enclose the HhH domain. Residue 127-134 (GEFRTGKT) participates in ATP binding.

The protein belongs to the RecA family. RAD51 subfamily. In terms of assembly, forms linear homooligomers, giving rise to a RAD51 nucleoprotein filament, which is essential for strand-pairing reactions during DNA recombination. As to expression, expressed at high levels in lymphoid and reproductive organs.

It localises to the nucleus. The protein localises to the cytoplasm. It is found in the chromosome. Functionally, plays an important role in homologous strand exchange, a key step in DNA repair through homologous recombination (HR). Binds to single-stranded DNA in an ATP-dependent manner to form nucleoprotein filaments which are essential for the homology search and strand exchange. Catalyzes the recognition of homology and strand exchange between homologous DNA partners to form a joint molecule between a processed DNA break and the repair template. Recruited to resolve stalled replication forks during replication stress. Also involved in interstrand cross-link repair. The protein is DNA repair protein RAD51 homolog 1 (RAD51A) of Gallus gallus (Chicken).